The chain runs to 158 residues: NADH-quinone oxidoreductase subunit B (158 aa).

[4Fe-4S] cluster contacts are provided by Cys36, Cys37, Cys101, and Cys131.

Belongs to the complex I 20 kDa subunit family. In terms of assembly, NDH-1 is composed of 14 different subunits. Subunits NuoB, C, D, E, F, and G constitute the peripheral sector of the complex. [4Fe-4S] cluster serves as cofactor.

The protein resides in the cell inner membrane. It catalyses the reaction a quinone + NADH + 5 H(+)(in) = a quinol + NAD(+) + 4 H(+)(out). NDH-1 shuttles electrons from NADH, via FMN and iron-sulfur (Fe-S) centers, to quinones in the respiratory chain. The immediate electron acceptor for the enzyme in this species is believed to be ubiquinone. Couples the redox reaction to proton translocation (for every two electrons transferred, four hydrogen ions are translocated across the cytoplasmic membrane), and thus conserves the redox energy in a proton gradient. The protein is NADH-quinone oxidoreductase subunit B of Francisella philomiragia subsp. philomiragia (strain ATCC 25017 / CCUG 19701 / FSC 153 / O#319-036).